The following is a 142-amino-acid chain: Large ribosomal subunit protein uL13 (142 aa).

The protein belongs to the universal ribosomal protein uL13 family. In terms of assembly, part of the 50S ribosomal subunit.

Its function is as follows. This protein is one of the early assembly proteins of the 50S ribosomal subunit, although it is not seen to bind rRNA by itself. It is important during the early stages of 50S assembly. This is Large ribosomal subunit protein uL13 from Sodalis glossinidius (strain morsitans).